The following is a 115-amino-acid chain: NAD(P)H-quinone oxidoreductase subunit M, organellar chromatophore (115 aa).

This sequence belongs to the complex I NdhM subunit family. As to quaternary structure, NDH-1 can be composed of about 15 different subunits; different subcomplexes with different compositions have been identified which probably have different functions.

It localises to the plastid. The protein localises to the organellar chromatophore thylakoid membrane. The enzyme catalyses a plastoquinone + NADH + (n+1) H(+)(in) = a plastoquinol + NAD(+) + n H(+)(out). The catalysed reaction is a plastoquinone + NADPH + (n+1) H(+)(in) = a plastoquinol + NADP(+) + n H(+)(out). In terms of biological role, NDH-1 shuttles electrons from an unknown electron donor, via FMN and iron-sulfur (Fe-S) centers, to quinones in the respiratory and/or the photosynthetic chain. The immediate electron acceptor for the enzyme in this species is believed to be plastoquinone. Couples the redox reaction to proton translocation, and thus conserves the redox energy in a proton gradient. The polypeptide is NAD(P)H-quinone oxidoreductase subunit M, organellar chromatophore (Paulinella chromatophora).